Here is a 269-residue protein sequence, read N- to C-terminus: Ribonuclease HII (269 aa).

The RNase H type-2 domain occupies 61–250 (RLVCGVDEAG…VRKMLSPGLE (190 aa)). Positions 67, 68, and 158 each coordinate a divalent metal cation.

This sequence belongs to the RNase HII family. Requires Mn(2+) as cofactor. Mg(2+) serves as cofactor.

It is found in the cytoplasm. It carries out the reaction Endonucleolytic cleavage to 5'-phosphomonoester.. Endonuclease that specifically degrades the RNA of RNA-DNA hybrids. This Parvibaculum lavamentivorans (strain DS-1 / DSM 13023 / NCIMB 13966) protein is Ribonuclease HII.